We begin with the raw amino-acid sequence, 462 residues long: MLKIYNSLTRQKEEFKPITEGKVGMYVCGVTIYDLCHIGHGRTFVSFDVISRYLRFLGYDLTFVRNITDIDDKIIKRAAENNESCEALTERLIAEMHADFDALKMKRPDVEPRATEYITEIVELVERLIERGFAYVASNGDVMFEVKKFDEYGRLSRQDLEQLQAGSRVTLEETSVKRSGMDFVLWKMSKPGEPTWESPWGPGRPGWHIECSAMNSSILGNHFDIHGGGSDLMFPHHENEIAQSCCAHDAKYVNTWMHSGMVMIDREKMSKSLGNFFTIRDVLAHYDSETVRYFLMSGHYRSQLNYSEENLNQARSSLERLYTSLRGLDLTVTPAGGETFVTRFSTAMNDDFNTPEAYSVLFEMAREVNRLKTENIEAASKLGALMRELAEVLGLLSQEPEAFLQGDSGSDNEVAEIEALIKARNDARAAKDWSAADAARDAITALNIVLEDGPEGTTWRRK.

Cys28 provides a ligand contact to Zn(2+). The 'HIGH' region signature appears at 30 to 40 (VTIYDLCHIGH). Residues Cys211, His236, and Glu240 each coordinate Zn(2+). The 'KMSKS' region motif lies at 268 to 272 (KMSKS). Lys271 contacts ATP.

Belongs to the class-I aminoacyl-tRNA synthetase family. In terms of assembly, monomer. It depends on Zn(2+) as a cofactor.

It is found in the cytoplasm. The enzyme catalyses tRNA(Cys) + L-cysteine + ATP = L-cysteinyl-tRNA(Cys) + AMP + diphosphate. In Aliivibrio salmonicida (strain LFI1238) (Vibrio salmonicida (strain LFI1238)), this protein is Cysteine--tRNA ligase.